The sequence spans 728 residues: LPS-assembly protein LptD (728 aa).

Positions methionine 1–alanine 21 are cleaved as a signal peptide.

It belongs to the LptD family. Component of the lipopolysaccharide transport and assembly complex. Interacts with LptE and LptA.

Its subcellular location is the cell outer membrane. Its function is as follows. Together with LptE, is involved in the assembly of lipopolysaccharide (LPS) at the surface of the outer membrane. The chain is LPS-assembly protein LptD from Thiobacillus denitrificans (strain ATCC 25259 / T1).